Consider the following 246-residue polypeptide: Transcription factor MYB13 (246 aa).

HTH myb-type domains follow at residues 9 to 61 (KIGL…INYL) and 62 to 116 (RPDI…KKRL). 2 DNA-binding regions (H-T-H motif) span residues 37 to 61 (WRAL…INYL) and 89 to 112 (WSAI…HTHL).

In terms of tissue distribution, expressed in roots and flowers. Expressed in shoot apex, axillary buds, at the basis of flowers and branching points of inflorescences.

Its subcellular location is the nucleus. In terms of biological role, plays a regulatory role in meristem function. Functions as component of a regulatory network controlling the establishment and/or development of the shoot system by the regulation of apical meristem function. May play a role in tolerance to boric acid. The chain is Transcription factor MYB13 from Arabidopsis thaliana (Mouse-ear cress).